The sequence spans 153 residues: Movement protein TGB3 (153 aa).

Over 1–50 (MEAPAITHSSGCVCSDCQWSGSPTVDTKVYLGSGTHANTTKTRETSFLSV) the chain is Cytoplasmic. Residues 51–71 (LNDNAWLFVIAALILCLYFII) traverse the membrane as a helical segment. The Lumenal portion of the chain corresponds to 72–127 (SKPHVDAVYTEFHQDLNGFSMKLAPGVPIDPKVIAAVKNWQKYPFGTDPRENMVTS). Residues 128–148 (IVSGLRHSFCILLLVVVLLVY) traverse the membrane as a helical segment. Topologically, residues 149–153 (VCHKP) are cytoplasmic.

Belongs to the virgaviridae TGB3 movement protein family. As to quaternary structure, interacts with movement proteins TGB1 and TGB2. TGB1-TGB3-TGB2 complex formation is enhanced by ATP hydrolysis.

Its subcellular location is the host cell junction. The protein resides in the host plasmodesma. The protein localises to the host endoplasmic reticulum membrane. It localises to the host cytoplasm. It is found in the host cytoskeleton. Its function is as follows. Participates in the transport of viral genome to neighboring plant cells directly through plasmodesmata, without any budding. TGBp2 and TGBp3 are necessary for intracellular delivery of TGBp1-containing vRNPs to plasmodesmata. Can gate plasmodesmata and increase their size exclusion limit. Induces host actin cytoskeleton network thickening, which probably plays a major role in virus cell-to-cell movement. The polypeptide is Movement protein TGB3 (Arachis hypogaea (Peanut)).